The chain runs to 273 residues: Formamidopyrimidine-DNA glycosylase (273 aa).

Pro2 acts as the Schiff-base intermediate with DNA in catalysis. Glu3 serves as the catalytic Proton donor. Lys59 serves as the catalytic Proton donor; for beta-elimination activity. DNA contacts are provided by His93, Arg111, and Arg154. The segment at 239-273 (KVYGRGGEPCKECGHTLVRIRLAGRSTVFCPCCQV) adopts an FPG-type zinc-finger fold. Catalysis depends on Arg263, which acts as the Proton donor; for delta-elimination activity.

This sequence belongs to the FPG family. In terms of assembly, monomer. It depends on Zn(2+) as a cofactor.

The enzyme catalyses Hydrolysis of DNA containing ring-opened 7-methylguanine residues, releasing 2,6-diamino-4-hydroxy-5-(N-methyl)formamidopyrimidine.. It carries out the reaction 2'-deoxyribonucleotide-(2'-deoxyribose 5'-phosphate)-2'-deoxyribonucleotide-DNA = a 3'-end 2'-deoxyribonucleotide-(2,3-dehydro-2,3-deoxyribose 5'-phosphate)-DNA + a 5'-end 5'-phospho-2'-deoxyribonucleoside-DNA + H(+). Involved in base excision repair of DNA damaged by oxidation or by mutagenic agents. Acts as a DNA glycosylase that recognizes and removes damaged bases. Has a preference for oxidized purines, such as 7,8-dihydro-8-oxoguanine (8-oxoG). Has AP (apurinic/apyrimidinic) lyase activity and introduces nicks in the DNA strand. Cleaves the DNA backbone by beta-delta elimination to generate a single-strand break at the site of the removed base with both 3'- and 5'-phosphates. The sequence is that of Formamidopyrimidine-DNA glycosylase from Desulfitobacterium hafniense (strain DSM 10664 / DCB-2).